Reading from the N-terminus, the 144-residue chain is Cytochrome c oxidase subunit 4 isoform 1, mitochondrial (144 aa).

Topologically, residues 1 to 73 are mitochondrial matrix; sequence SVVKSEDFSL…SFAEMNRGSN (73 aa). N6-acetyllysine; alternate is present on Lys-4. Lys-4 is subject to N6-succinyllysine; alternate. Lys-28 is modified (N6-acetyllysine). Ser-31 and Ser-33 each carry phosphoserine. Lys-35 is subject to N6-acetyllysine; alternate. Lys-35 is modified (N6-succinyllysine; alternate). Lys-42 is subject to N6-acetyllysine. Residues 74 to 99 traverse the membrane as a helical segment; sequence EWKTVVGGAMFFIGFTALVIMWQKHY. At 100–144 the chain is on the mitochondrial intermembrane side; the sequence is VYGPLPQSFDKEWVAKQTKRMLDMKVNPIQGLASKWDYEKNEWKK.

The protein belongs to the cytochrome c oxidase IV family. In terms of assembly, component of the cytochrome c oxidase (complex IV, CIV), a multisubunit enzyme composed of 14 subunits. The complex is composed of a catalytic core of 3 subunits MT-CO1, MT-CO2 and MT-CO3, encoded in the mitochondrial DNA, and 11 supernumerary subunits COX4I, COX5A, COX5B, COX6A, COX6B, COX6C, COX7A, COX7B, COX7C, COX8 and NDUFA4, which are encoded in the nuclear genome. The complex exists as a monomer or a dimer and forms supercomplexes (SCs) in the inner mitochondrial membrane with NADH-ubiquinone oxidoreductase (complex I, CI) and ubiquinol-cytochrome c oxidoreductase (cytochrome b-c1 complex, complex III, CIII), resulting in different assemblies (supercomplex SCI(1)III(2)IV(1) and megacomplex MCI(2)III(2)IV(2)). Interacts with PHB2; the interaction decreases in absence of SPHK2. Interacts with AFG1L. Interacts with ABCB7; this interaction allows the regulation of cellular iron homeostasis and cellular reactive oxygen species (ROS) levels in cardiomyocytes. Interacts with FLVCR2; this interaction occurs in the absence of heme and is disrupted upon heme binding. Interacts with IRGC.

It is found in the mitochondrion inner membrane. Its pathway is energy metabolism; oxidative phosphorylation. Component of the cytochrome c oxidase, the last enzyme in the mitochondrial electron transport chain which drives oxidative phosphorylation. The respiratory chain contains 3 multisubunit complexes succinate dehydrogenase (complex II, CII), ubiquinol-cytochrome c oxidoreductase (cytochrome b-c1 complex, complex III, CIII) and cytochrome c oxidase (complex IV, CIV), that cooperate to transfer electrons derived from NADH and succinate to molecular oxygen, creating an electrochemical gradient over the inner membrane that drives transmembrane transport and the ATP synthase. Cytochrome c oxidase is the component of the respiratory chain that catalyzes the reduction of oxygen to water. Electrons originating from reduced cytochrome c in the intermembrane space (IMS) are transferred via the dinuclear copper A center (CU(A)) of subunit 2 and heme A of subunit 1 to the active site in subunit 1, a binuclear center (BNC) formed by heme A3 and copper B (CU(B)). The BNC reduces molecular oxygen to 2 water molecules using 4 electrons from cytochrome c in the IMS and 4 protons from the mitochondrial matrix. The chain is Cytochrome c oxidase subunit 4 isoform 1, mitochondrial (COX4I1) from Gorilla gorilla gorilla (Western lowland gorilla).